The sequence spans 157 residues: Ribosomal RNA large subunit methyltransferase H (157 aa).

S-adenosyl-L-methionine is bound by residues Leu-73, Gly-105, and 124–129 (LSKMTF).

This sequence belongs to the RNA methyltransferase RlmH family. As to quaternary structure, homodimer.

It localises to the cytoplasm. The catalysed reaction is pseudouridine(1915) in 23S rRNA + S-adenosyl-L-methionine = N(3)-methylpseudouridine(1915) in 23S rRNA + S-adenosyl-L-homocysteine + H(+). Specifically methylates the pseudouridine at position 1915 (m3Psi1915) in 23S rRNA. The sequence is that of Ribosomal RNA large subunit methyltransferase H from Parabacteroides distasonis (strain ATCC 8503 / DSM 20701 / CIP 104284 / JCM 5825 / NCTC 11152).